Here is a 336-residue protein sequence, read N- to C-terminus: Inositol 2-dehydrogenase (336 aa).

This sequence belongs to the Gfo/Idh/MocA family. Homotetramer.

It carries out the reaction myo-inositol + NAD(+) = scyllo-inosose + NADH + H(+). Involved in the oxidation of myo-inositol (MI) to 2-keto-myo-inositol (2KMI or 2-inosose). The chain is Inositol 2-dehydrogenase from Acidiphilium cryptum (strain JF-5).